Here is a 118-residue protein sequence, read N- to C-terminus: Large ribosomal subunit protein bL20 (118 aa).

It belongs to the bacterial ribosomal protein bL20 family.

Functionally, binds directly to 23S ribosomal RNA and is necessary for the in vitro assembly process of the 50S ribosomal subunit. It is not involved in the protein synthesizing functions of that subunit. In Staphylococcus aureus (strain Mu3 / ATCC 700698), this protein is Large ribosomal subunit protein bL20.